Here is a 295-residue protein sequence, read N- to C-terminus: Reticulon-like protein 1 (295 aa).

Residues 1–50 (MSASAQHSQAQQQQQQKSCNCDLLLWRNPVQTGKYFGGSLLALLILKKVN) lie on the Cytoplasmic side of the membrane. Residues 20–220 (NCDLLLWRNP…ISNLVKSKTA (201 aa)) form the Reticulon domain. Residues 51–73 (LITFFLKVAYTILFTTGSIEFVS) form a helical membrane-spanning segment. The Lumenal portion of the chain corresponds to 74 to 142 (KLFLGQGLIT…ALFLLHKFFS (69 aa)). A helical membrane pass occupies residues 143 to 163 (WFSIWTIVFVADIFTFTLPVI). At 164 to 295 (YHSYKHEIDA…LQNELEKNNA (132 aa)) the chain is on the cytoplasmic side. Residues threonine 186 and threonine 219 each carry the phosphothreonine modification. A compositionally biased stretch (polar residues) spans 219 to 235 (TAPVSSTAGPQTASTSK). The disordered stretch occupies residues 219-295 (TAPVSSTAGP…LQNELEKNNA (77 aa)). At serine 232 the chain carries Phosphoserine. Residues 265–295 (STTQEFNVDELSNELKKSTKNLQNELEKNNA) adopt a coiled-coil conformation.

In terms of assembly, interacts with POM33.

It localises to the endoplasmic reticulum membrane. This Saccharomyces cerevisiae (strain ATCC 204508 / S288c) (Baker's yeast) protein is Reticulon-like protein 1 (RTN1).